Here is a 191-residue protein sequence, read N- to C-terminus: Leucyl/phenylalanyl-tRNA--protein transferase (191 aa).

It belongs to the L/F-transferase family.

It localises to the cytoplasm. The catalysed reaction is N-terminal L-lysyl-[protein] + L-leucyl-tRNA(Leu) = N-terminal L-leucyl-L-lysyl-[protein] + tRNA(Leu) + H(+). It catalyses the reaction N-terminal L-arginyl-[protein] + L-leucyl-tRNA(Leu) = N-terminal L-leucyl-L-arginyl-[protein] + tRNA(Leu) + H(+). The enzyme catalyses L-phenylalanyl-tRNA(Phe) + an N-terminal L-alpha-aminoacyl-[protein] = an N-terminal L-phenylalanyl-L-alpha-aminoacyl-[protein] + tRNA(Phe). Its function is as follows. Functions in the N-end rule pathway of protein degradation where it conjugates Leu, Phe and, less efficiently, Met from aminoacyl-tRNAs to the N-termini of proteins containing an N-terminal arginine or lysine. This chain is Leucyl/phenylalanyl-tRNA--protein transferase, found in Rubrobacter xylanophilus (strain DSM 9941 / JCM 11954 / NBRC 16129 / PRD-1).